An 84-amino-acid polypeptide reads, in one-letter code: Large ribosomal subunit protein bL31B (84 aa).

The protein belongs to the bacterial ribosomal protein bL31 family. Type B subfamily. As to quaternary structure, part of the 50S ribosomal subunit.

The polypeptide is Large ribosomal subunit protein bL31B (Photorhabdus laumondii subsp. laumondii (strain DSM 15139 / CIP 105565 / TT01) (Photorhabdus luminescens subsp. laumondii)).